Reading from the N-terminus, the 285-residue chain is (3S)-malyl-CoA thioesterase (285 aa).

Substrate is bound by residues Arg-70 and Glu-122. Glu-122 and Asp-148 together coordinate Mg(2+).

Belongs to the HpcH/HpaI aldolase family. In terms of assembly, homodimer or homotrimer. Mg(2+) serves as cofactor.

The enzyme catalyses (S)-malyl-CoA + H2O = (S)-malate + CoA + H(+). In terms of biological role, catalyzes the hydrolysis of (3S)-malyl-CoA to (3S)-malate and free CoA. Inactive towards beta-methylmalyl-CoA and other CoA esters. This Cereibacter sphaeroides (strain KD131 / KCTC 12085) (Rhodobacter sphaeroides) protein is (3S)-malyl-CoA thioesterase.